We begin with the raw amino-acid sequence, 659 residues long: L-type lectin-domain containing receptor kinase V.7 (659 aa).

A signal peptide spans 1–25 (MSHKVLQIVLVLLLTLFSSTHNSNG). The legume-lectin like stretch occupies residues 22–244 (NSNGNFLMEE…GALYYVMQFS (223 aa)). At 26 to 275 (NFLMEEAAAA…PKKSYDRTRR (250 aa)) the chain is on the extracellular side. Asn45, Asn64, Asn110, and Asn192 each carry an N-linked (GlcNAc...) asparagine glycan. The helical transmembrane segment at 276 to 296 (ILAVCLTLAVFTALVASGIGF) threads the bilayer. Residues 297–659 (VFYVRHKKVK…LTNSFVSHGR (363 aa)) lie on the Cytoplasmic side of the membrane. Residues 333–595 (FKEKQLLGKG…GLLCAHHTEL (263 aa)) enclose the Protein kinase domain. ATP contacts are provided by residues 339-347 (LGKGGFGQV) and Lys362. Asp462 acts as the Proton acceptor in catalysis.

This sequence in the C-terminal section; belongs to the protein kinase superfamily. Ser/Thr protein kinase family. The protein in the N-terminal section; belongs to the leguminous lectin family.

The protein localises to the cell membrane. The catalysed reaction is L-seryl-[protein] + ATP = O-phospho-L-seryl-[protein] + ADP + H(+). It carries out the reaction L-threonyl-[protein] + ATP = O-phospho-L-threonyl-[protein] + ADP + H(+). Involved in resistance response to the pathogenic oomycetes Phytophthora infestans and Phytophthora capsici and to the pathogenic bacteria Pseudomonas syringae. In Arabidopsis thaliana (Mouse-ear cress), this protein is L-type lectin-domain containing receptor kinase V.7.